We begin with the raw amino-acid sequence, 225 residues long: NAD(P)H-quinone oxidoreductase subunit K, chloroplastic (225 aa).

4 residues coordinate [4Fe-4S] cluster: cysteine 43, cysteine 44, cysteine 108, and cysteine 139.

Belongs to the complex I 20 kDa subunit family. As to quaternary structure, NDH is composed of at least 16 different subunits, 5 of which are encoded in the nucleus. [4Fe-4S] cluster serves as cofactor.

It localises to the plastid. Its subcellular location is the chloroplast thylakoid membrane. The catalysed reaction is a plastoquinone + NADH + (n+1) H(+)(in) = a plastoquinol + NAD(+) + n H(+)(out). The enzyme catalyses a plastoquinone + NADPH + (n+1) H(+)(in) = a plastoquinol + NADP(+) + n H(+)(out). NDH shuttles electrons from NAD(P)H:plastoquinone, via FMN and iron-sulfur (Fe-S) centers, to quinones in the photosynthetic chain and possibly in a chloroplast respiratory chain. The immediate electron acceptor for the enzyme in this species is believed to be plastoquinone. Couples the redox reaction to proton translocation, and thus conserves the redox energy in a proton gradient. The protein is NAD(P)H-quinone oxidoreductase subunit K, chloroplastic of Dioscorea elephantipes (Elephant's foot yam).